The chain runs to 515 residues: 2-isopropylmalate synthase (515 aa).

The region spanning 5-267 (VIIFDTTLRD…HTGLDHKEIH (263 aa)) is the Pyruvate carboxyltransferase domain. Mn(2+) contacts are provided by Asp-14, His-202, His-204, and Asn-238. Residues 392–515 (KLNYLSVQSG…EMKQQKFATV (124 aa)) form a regulatory domain region.

It belongs to the alpha-IPM synthase/homocitrate synthase family. LeuA type 1 subfamily. As to quaternary structure, homodimer. Requires Mn(2+) as cofactor.

It localises to the cytoplasm. The catalysed reaction is 3-methyl-2-oxobutanoate + acetyl-CoA + H2O = (2S)-2-isopropylmalate + CoA + H(+). Its pathway is amino-acid biosynthesis; L-leucine biosynthesis; L-leucine from 3-methyl-2-oxobutanoate: step 1/4. Catalyzes the condensation of the acetyl group of acetyl-CoA with 3-methyl-2-oxobutanoate (2-ketoisovalerate) to form 3-carboxy-3-hydroxy-4-methylpentanoate (2-isopropylmalate). The polypeptide is 2-isopropylmalate synthase (Vibrio atlanticus (strain LGP32) (Vibrio splendidus (strain Mel32))).